The primary structure comprises 236 residues: Eukaryotic translation initiation factor 3 subunit J (236 aa).

A disordered region spans residues 1–84 (MADDWESAAD…LREEEAEAER (84 aa)). Residues 28-46 (GEDEDEDIKDSWEDEEEKK) show a composition bias toward acidic residues. 2 stretches are compositionally biased toward basic and acidic residues: residues 47-58 (DEEKPTKTEAPA) and 68-77 (AKLEQQALRE).

Belongs to the eIF-3 subunit J family. As to quaternary structure, component of the eukaryotic translation initiation factor 3 (eIF-3) complex. The eIF-3 complex interacts with pix.

It is found in the cytoplasm. Component of the eukaryotic translation initiation factor 3 (eIF-3) complex, which is involved in protein synthesis of a specialized repertoire of mRNAs and, together with other initiation factors, stimulates binding of mRNA and methionyl-tRNAi to the 40S ribosome. The eIF-3 complex specifically targets and initiates translation of a subset of mRNAs involved in cell proliferation. The protein is Eukaryotic translation initiation factor 3 subunit J of Drosophila sechellia (Fruit fly).